The sequence spans 178 residues: Large ribosomal subunit protein bL25 (178 aa).

This sequence belongs to the bacterial ribosomal protein bL25 family. CTC subfamily. In terms of assembly, part of the 50S ribosomal subunit; part of the 5S rRNA/L5/L18/L25 subcomplex. Contacts the 5S rRNA. Binds to the 5S rRNA independently of L5 and L18.

This is one of the proteins that binds to the 5S RNA in the ribosome where it forms part of the central protuberance. In Campylobacter lari (strain RM2100 / D67 / ATCC BAA-1060), this protein is Large ribosomal subunit protein bL25.